The primary structure comprises 363 residues: UDP-N-acetylglucosamine--N-acetylmuramyl-(pentapeptide) pyrophosphoryl-undecaprenol N-acetylglucosamine transferase (363 aa).

UDP-N-acetyl-alpha-D-glucosamine-binding positions include 13–15 (TGG), Asn-125, Arg-166, Ser-195, Ile-249, 268–273 (ALTVSE), and Gln-294.

The protein belongs to the glycosyltransferase 28 family. MurG subfamily.

The protein resides in the cell inner membrane. The catalysed reaction is di-trans,octa-cis-undecaprenyl diphospho-N-acetyl-alpha-D-muramoyl-L-alanyl-D-glutamyl-meso-2,6-diaminopimeloyl-D-alanyl-D-alanine + UDP-N-acetyl-alpha-D-glucosamine = di-trans,octa-cis-undecaprenyl diphospho-[N-acetyl-alpha-D-glucosaminyl-(1-&gt;4)]-N-acetyl-alpha-D-muramoyl-L-alanyl-D-glutamyl-meso-2,6-diaminopimeloyl-D-alanyl-D-alanine + UDP + H(+). It functions in the pathway cell wall biogenesis; peptidoglycan biosynthesis. In terms of biological role, cell wall formation. Catalyzes the transfer of a GlcNAc subunit on undecaprenyl-pyrophosphoryl-MurNAc-pentapeptide (lipid intermediate I) to form undecaprenyl-pyrophosphoryl-MurNAc-(pentapeptide)GlcNAc (lipid intermediate II). This Cellvibrio japonicus (strain Ueda107) (Pseudomonas fluorescens subsp. cellulosa) protein is UDP-N-acetylglucosamine--N-acetylmuramyl-(pentapeptide) pyrophosphoryl-undecaprenol N-acetylglucosamine transferase.